The primary structure comprises 158 residues: Major latex protein 22 (158 aa).

The protein belongs to the MLP family. Laticifer.

It is found in the vacuole. It localises to the cytoplasmic vesicle. Functionally, not known; MLPs constitute up to 50% of the soluble latex protein. This chain is Major latex protein 22 (MLP22), found in Papaver somniferum (Opium poppy).